The following is a 319-amino-acid chain: Ribonuclease Z (319 aa).

Residues H62, H64, D66, H67, H145, D216, and H274 each coordinate Zn(2+). Catalysis depends on D66, which acts as the Proton acceptor.

Belongs to the RNase Z family. As to quaternary structure, homodimer. The cofactor is Zn(2+).

The catalysed reaction is Endonucleolytic cleavage of RNA, removing extra 3' nucleotides from tRNA precursor, generating 3' termini of tRNAs. A 3'-hydroxy group is left at the tRNA terminus and a 5'-phosphoryl group is left at the trailer molecule.. In terms of biological role, zinc phosphodiesterase, which displays some tRNA 3'-processing endonuclease activity. Probably involved in tRNA maturation, by removing a 3'-trailer from precursor tRNA. This Synechococcus sp. (strain CC9605) protein is Ribonuclease Z.